The chain runs to 151 residues: Ocs element-binding factor 1 (151 aa).

A compositionally biased stretch (polar residues) spans 1–17 (MSSSSLSPTAGRTSGSD). Positions 1-47 (MSSSSLSPTAGRTSGSDGDSAADTHRREKRRLSNRESARRSRLRKQQ) are disordered. The segment covering 22-39 (ADTHRREKRRLSNRESAR) has biased composition (basic and acidic residues). A bZIP domain is found at 24 to 87 (THRREKRRLS…TRVEQENTVL (64 aa)). The segment at 26–45 (RREKRRLSNRESARRSRLRK) is basic motif. The leucine-zipper stretch occupies residues 52-59 (LVQEVARL).

It belongs to the bZIP family. Roots and shoots of young plants, and basal portion of leaves.

It localises to the nucleus. Functionally, may contribute to developmentally specific patterns of gene expression. Binds specifically to ocs elements which are transcriptional enhancer found in the promoters of several plant genes. OCSBF-1 is able to bind to a site within each half of the ocs element as well as to animal AP-1 and CREB sites. This chain is Ocs element-binding factor 1 (OBF1), found in Zea mays (Maize).